The primary structure comprises 533 residues: Large neutral amino acids transporter small subunit 2 (533 aa).

The segment at 1–33 is disordered; the sequence is MEKGTRQRNNTAKNHPDRGSDTSPEAEASSGGG. The Cytoplasmic portion of the chain corresponds to 1–45; sequence MEKGTRQRNNTAKNHPDRGSDTSPEAEASSGGGGVALKKEIGLVS. Residues Ser-20, Ser-23, Ser-29, and Ser-30 each carry the phosphoserine modification. The chain crosses the membrane as a helical span at residues 46 to 66; the sequence is ACGIIVGNIIGSGIFVSPKGV. Ile-54 lines the L-leucine pocket. The Extracellular segment spans residues 67-74; sequence LENAGSVG. Residues 75 to 96 form a helical membrane-spanning segment; sequence LALIVWIVTGVITAVGALCYAE. At 97-117 the chain is on the cytoplasmic side; that stretch reads LGVTIPKSGGDYSYVKDIFGG. The chain crosses the membrane as a helical span at residues 118–150; that stretch reads LAGFLRLWIAVLVIYPTNQAVIALTFSNYVLQP. Residue Asn-135 participates in L-tryptophan binding. At 151–158 the chain is on the extracellular side; it reads LFPTCFPP. A helical membrane pass occupies residues 159–179; sequence ESGLRLLAAICLLLLTWVNCS. Residues 180 to 182 lie on the Cytoplasmic side of the membrane; the sequence is SVR. A helical transmembrane segment spans residues 183–211; that stretch reads WATRVQDIFTAGKLLALALIIIMGVVQIC. At 212–231 the chain is on the extracellular side; the sequence is KGEFFWLEPKNAFENFQEPD. Residues 232–253 traverse the membrane as a helical segment; it reads IGLVALAFLQGSFAYGGWNFLN. Gly-247 contributes to the L-leucine binding site. At 254-266 the chain is on the cytoplasmic side; it reads YVTEELVDPYKNL. The helical transmembrane segment at 267–288 threads the bilayer; sequence PRAIFISIPLVTFVYVFANIAY. The Extracellular segment spans residues 289-313; that stretch reads VTAMSPQELLASNAVAVTFGEKLLG. The helical transmembrane segment at 314 to 339 threads the bilayer; that stretch reads VMAWIMPISVALSTFGGVNGSLFTSS. The Cytoplasmic segment spans residues 340–365; that stretch reads RLFFAGAREGHLPSVLAMIHVKRCTP. Residues 366–383 form a helical membrane-spanning segment; that stretch reads IPALLFTCLSTLLMLVTS. Over 384–387 the chain is Extracellular; the sequence is DMYT. A helical transmembrane segment spans residues 388 to 409; that stretch reads LINYVGFINYLFYGVTVAGQIV. Asn-396 serves as a coordination point for L-tryptophan. The Cytoplasmic portion of the chain corresponds to 410–424; the sequence is LRWKKPDIPRPIKIS. Helical transmembrane passes span 425-447 and 448-467; these read LLFPIIYLLFWAFLLIFSLWSEP and VVCGIGLAIMLTGVPVYFLG. Residues 468 to 533 are Cytoplasmic-facing; that stretch reads VYWQHKPKCF…VKDPDSEEQP (66 aa). The tract at residues 500–533 is disordered; that stretch reads GDSGTEETIDDVEEQHKPIFQPTPVKDPDSEEQP. Positions 502 to 512 are enriched in acidic residues; the sequence is SGTEETIDDVE. Residue Ser-529 is modified to Phosphoserine.

Belongs to the amino acid-polyamine-organocation (APC) superfamily. L-type amino acid transporter (LAT) (TC 2.A.3.8) family. As to quaternary structure, disulfide-linked heterodimer composed of the catalytic light chain subunit SLC7A8 and the heavy chain subunit SLC3A2. SLC3A2 acts as a chaperone for correct plasma membrane trafficking and stabilization of SLC7A8 and modulates the substrate affinity and specificity of SLC7A8. ICAM-1 associates with the heterodimer SLC3A2/SLC7A8; facilitates leucine uptake. As to expression, expression is seen in jejunum mucosa and the epithelial cells of the jejunum, ileum and colon, as well as in kidney, placenta, brain, testis and skeletal muscle. Expressed in retina, inner blood-retinal barrier of retina, retinal vascular endothelial cells. Also expressed in the intestinal epithelial cell line IEC-6 and in the retinal capillary endothelial cell line TR-iBRB2.

It is found in the cell membrane. The protein localises to the basolateral cell membrane. It catalyses the reaction L-dopa(out) + L-phenylalanine(in) = L-dopa(in) + L-phenylalanine(out). The catalysed reaction is 3,3'-diiodo-L-thyronine(out) = 3,3'-diiodo-L-thyronine(in). The enzyme catalyses L-histidine(in) + L-phenylalanine(out) = L-histidine(out) + L-phenylalanine(in). It carries out the reaction L-tryptophan(in) + L-phenylalanine(out) = L-tryptophan(out) + L-phenylalanine(in). It catalyses the reaction L-isoleucine(in) + L-phenylalanine(out) = L-isoleucine(out) + L-phenylalanine(in). The catalysed reaction is L-valine(in) + L-phenylalanine(out) = L-valine(out) + L-phenylalanine(in). The enzyme catalyses L-leucine(in) + L-phenylalanine(out) = L-leucine(out) + L-phenylalanine(in). It carries out the reaction L-glutamine(in) + L-phenylalanine(out) = L-glutamine(out) + L-phenylalanine(in). It catalyses the reaction L-cysteine(in) + L-phenylalanine(out) = L-cysteine(out) + L-phenylalanine(in). The catalysed reaction is L-phenylalanine(out) + L-methionine(in) = L-phenylalanine(in) + L-methionine(out). The enzyme catalyses L-leucine(out) + L-methionine(in) = L-leucine(in) + L-methionine(out). It carries out the reaction L-cysteine(out) + L-methionine(in) = L-cysteine(in) + L-methionine(out). It catalyses the reaction S-methylmercury-L-cysteine(out) + L-methionine(in) = S-methylmercury-L-cysteine(in) + L-methionine(out). The catalysed reaction is S-methylmercury-L-cysteine(in) + L-leucine(out) = S-methylmercury-L-cysteine(out) + L-leucine(in). The enzyme catalyses S-methylmercury-L-cysteine(in) + L-phenylalanine(out) = S-methylmercury-L-cysteine(out) + L-phenylalanine(in). It carries out the reaction L-phenylalanine(out) + L-serine(in) = L-phenylalanine(in) + L-serine(out). It catalyses the reaction L-phenylalanine(out) + glycine(in) = L-phenylalanine(in) + glycine(out). The catalysed reaction is L-phenylalanine(out) + L-alanine(in) = L-phenylalanine(in) + L-alanine(out). The enzyme catalyses 3,3',5-triiodo-L-thyronine(out) = 3,3',5-triiodo-L-thyronine(in). Its activity is regulated as follows. Leucine transport activity is inhibited by 2-amino-bicyclo-(2,2,1)-heptane-2-carboxylate (BCH), glycine, L-isomers of the neutral amino acids and histidine. Functionally, associates with SLC3A2 to form a functional heterodimeric complex that translocates small and large neutral amino acids with broad specificity and a stoichiometry of 1:1. Functions as amino acid antiporter mediating the influx of extracellular essential amino acids mainly in exchange with the efflux of highly concentrated intracellular amino acids. Has relatively symmetrical selectivities but strongly asymmetrical substrate affinities at both the intracellular and extracellular sides of the transporter. This asymmetry allows SLC7A8 to regulate intracellular amino acid pools (mM concentrations) by exchange with external amino acids (uM concentration range), equilibrating the relative concentrations of different amino acids across the plasma membrane instead of mediating their net uptake. May play an essential role in the reabsorption of neutral amino acids from the epithelial cells to the bloodstream in the kidney. Involved in the uptake of methylmercury (MeHg) when administered as the L-cysteine or D,L-homocysteine complexes, and hence plays a role in metal ion homeostasis and toxicity. Involved in the cellular activity of small molecular weight nitrosothiols, via the stereoselective transport of L-nitrosocysteine (L-CNSO) across the transmembrane. Imports the thyroid hormone diiodothyronine (T2) and to a smaller extent triiodothyronine (T3) but not rT 3 or thyroxine (T4). Mediates the uptake of L-DOPA. May participate in auditory function. The chain is Large neutral amino acids transporter small subunit 2 (Slc7a8) from Rattus norvegicus (Rat).